We begin with the raw amino-acid sequence, 345 residues long: Cytoskeleton protein RodZ (345 aa).

At 1 to 111 the chain is on the cytoplasmic side; the sequence is MNTEASQDQT…LGKKHKKRDG (111 aa). An HTH cro/C1-type domain is found at 19–79; sequence LRQARESLGL…KLVHLPEDEL (61 aa). Residues 30–49 constitute a DNA-binding region (H-T-H motif); that stretch reads QQTVAERLCLKVSTIRDIEE. Residues 112–132 traverse the membrane as a helical; Signal-anchor for type II membrane protein segment; it reads WLMSFTWLIVLVVLGLTGAWW. Over 133–345 the chain is Periplasmic; it reads WQNHQAQQAE…RVARLTVCVE (213 aa). The tract at residues 151–259 is disordered; it reads SAQLSQNGGQ…PLPTADAGVS (109 aa). A compositionally biased stretch (polar residues) spans 188–225; it reads PLTNHSGSAITNSATTSSVPKTTSTEPVDTANTNTTMH. Low complexity predominate over residues 229–241; sequence AASAAVSPSQVPQ.

Belongs to the RodZ family.

It localises to the cell inner membrane. Its function is as follows. Cytoskeletal protein that is involved in cell-shape control through regulation of the length of the long axis. The polypeptide is Cytoskeleton protein RodZ (Yersinia pestis bv. Antiqua (strain Antiqua)).